The chain runs to 160 residues: Transcriptional repressor NrdR (160 aa).

Over residues 1–11 the composition is skewed to polar residues; the sequence is MRCPSCSSLDT. Residues 1-20 form a disordered region; it reads MRCPSCSSLDTQVKDSRPTE. A zinc finger spans residues 3 to 34; sequence CPSCSSLDTQVKDSRPTEDSSVIRRRRVCLAC. One can recognise an ATP-cone domain in the interval 49–139; that stretch reads LTVIKRNGRR…VYRNFREAKD (91 aa).

Belongs to the NrdR family. It depends on Zn(2+) as a cofactor.

Its function is as follows. Negatively regulates transcription of bacterial ribonucleotide reductase nrd genes and operons by binding to NrdR-boxes. This Rhodopseudomonas palustris (strain BisA53) protein is Transcriptional repressor NrdR.